Consider the following 158-residue polypeptide: Auxin-responsive protein IAA31 (158 aa).

A compositionally biased stretch (low complexity) spans 1–40 (MEVSNSCSSFSSSSVDSTKPSPSESSVNLSLSLTFPSTSP). The disordered stretch occupies residues 1–49 (MEVSNSCSSFSSSSVDSTKPSPSESSVNLSLSLTFPSTSPQREARQDWP). Positions 29–33 (LSLSL) match the EAR-like (transcriptional repression) motif. One can recognise a PB1 domain in the interval 72 to 157 (SLFVKVYMEG…RRLKITRPER (86 aa)).

This sequence belongs to the Aux/IAA family. As to quaternary structure, homodimers and heterodimers.

It localises to the nucleus. Functionally, aux/IAA proteins are short-lived transcriptional factors that function as repressors of early auxin response genes at low auxin concentrations. Repression is thought to result from the interaction with auxin response factors (ARFs), proteins that bind to the auxin-responsive promoter element (AuxRE). Formation of heterodimers with ARF proteins may alter their ability to modulate early auxin response genes expression. The chain is Auxin-responsive protein IAA31 (IAA31) from Arabidopsis thaliana (Mouse-ear cress).